The chain runs to 447 residues: Na(+)-translocating NADH-quinone reductase subunit A (447 aa).

It belongs to the NqrA family. As to quaternary structure, composed of six subunits; NqrA, NqrB, NqrC, NqrD, NqrE and NqrF.

It carries out the reaction a ubiquinone + n Na(+)(in) + NADH + H(+) = a ubiquinol + n Na(+)(out) + NAD(+). In terms of biological role, NQR complex catalyzes the reduction of ubiquinone-1 to ubiquinol by two successive reactions, coupled with the transport of Na(+) ions from the cytoplasm to the periplasm. NqrA to NqrE are probably involved in the second step, the conversion of ubisemiquinone to ubiquinol. The protein is Na(+)-translocating NADH-quinone reductase subunit A of Photorhabdus laumondii subsp. laumondii (strain DSM 15139 / CIP 105565 / TT01) (Photorhabdus luminescens subsp. laumondii).